The sequence spans 470 residues: MAKKYDAGVKEYRDTYFTPDYVPLDTDLLACFKCTGQEGVPKEEVAAAVAAESSTGTWSTVWSELLVDLEFYKGRCYRIEDVPGDKDAFYAFIAYPLDLFEEGSITNVLTSLVGNVFGFKALRHLRLEDIRFPMAFIKTCGGPPSGIVVERDRLNKYGRPLLGCTIKPKLGLSGKNYGRVVYECLRGGLDLTKDDENINSQPFQRWRERFEFVAEAVKLAQQETGEVKGHYLNCTATTPEEMYKRAEFAKELDMPIIMHDYITGGFTANTGLANWCRENGMLLHIHRAMHAVIDRHPQHGIHFRVLAKCLRLSGGDQLHTGTVVGKLEGDRQTTLGYIDNLRESFVPEDRTRGNFFDQDWGSMPGVFAVASGGIHVWHMPALLAIFGDDSCLQFGGGTHGHPWGSAAGAAANRVALEACVKARNAGREIEKESRDILLEAAKHSPELAIALETWKEIKFEFDTVDKLDVQ.

The substrate site is built by Asn115 and Thr165. Catalysis depends on Lys167, which acts as the Proton acceptor. Lys169 contacts substrate. Mg(2+) is bound by residues Lys193, Asp195, and Glu196. N6-carboxylysine is present on Lys193. The active-site Proton acceptor is His286. Substrate is bound by residues Arg287, His319, and Ser371.

This sequence belongs to the RuBisCO large chain family. Type I subfamily. In terms of assembly, heterohexadecamer of 8 large chains and 8 small chains. Mg(2+) is required as a cofactor.

It is found in the carboxysome. It carries out the reaction 2 (2R)-3-phosphoglycerate + 2 H(+) = D-ribulose 1,5-bisphosphate + CO2 + H2O. The catalysed reaction is D-ribulose 1,5-bisphosphate + O2 = 2-phosphoglycolate + (2R)-3-phosphoglycerate + 2 H(+). In terms of biological role, ruBisCO catalyzes two reactions: the carboxylation of D-ribulose 1,5-bisphosphate, the primary event in carbon dioxide fixation, as well as the oxidative fragmentation of the pentose substrate in the photorespiration process. Both reactions occur simultaneously and in competition at the same active site. The sequence is that of Ribulose bisphosphate carboxylase large chain from Prochlorococcus marinus (strain NATL1A).